The chain runs to 792 residues: Phenylalanine--tRNA ligase beta subunit (792 aa).

The region spanning 39–147 (GESLGQVVVA…DDAPVGQALA (109 aa)) is the tRNA-binding domain. A B5 domain is found at 400–475 (PQPVHIRLRR…RIHGYDRVPT (76 aa)). Mg(2+)-binding residues include Asp453, Asp459, Glu462, and Glu463. The FDX-ACB domain occupies 698-791 (SRFPSVRRDL…IEREHRARIR (94 aa)).

It belongs to the phenylalanyl-tRNA synthetase beta subunit family. Type 1 subfamily. Tetramer of two alpha and two beta subunits. Mg(2+) serves as cofactor.

The protein resides in the cytoplasm. The enzyme catalyses tRNA(Phe) + L-phenylalanine + ATP = L-phenylalanyl-tRNA(Phe) + AMP + diphosphate + H(+). The protein is Phenylalanine--tRNA ligase beta subunit of Xanthomonas axonopodis pv. citri (strain 306).